A 396-amino-acid chain; its full sequence is Ribose-phosphate pyrophosphokinase 1, chloroplastic (396 aa).

The transit peptide at 1–36 directs the protein to the chloroplast; the sequence is MPLSYSAAAAAAPSPLAARSRGLLRRPPRSSPVVVR. Mg(2+) is bound by residues Asp-204, His-206, Asp-215, and Asp-219. Positions 290-305 are binding of phosphoribosylpyrophosphate; that stretch reads GKVAVMMDDMIDTAGT.

It belongs to the ribose-phosphate pyrophosphokinase family. Mg(2+) is required as a cofactor.

Its subcellular location is the plastid. It is found in the chloroplast. The catalysed reaction is D-ribose 5-phosphate + ATP = 5-phospho-alpha-D-ribose 1-diphosphate + AMP + H(+). In Oryza sativa subsp. japonica (Rice), this protein is Ribose-phosphate pyrophosphokinase 1, chloroplastic.